Reading from the N-terminus, the 511-residue chain is Cytochrome P450 714C3 (511 aa).

At 1–6 (MEKLLA) the chain is on the lumenal side. A helical; Signal-anchor for type III membrane protein transmembrane segment spans residues 7–27 (LIVVLVILLSLALFYLCNILW). Residues 28–511 (LRAVKIRKKL…GLPLMVTKLP (484 aa)) lie on the Cytoplasmic side of the membrane. Cys-458 serves as a coordination point for heme.

It belongs to the cytochrome P450 family. The cofactor is heme.

It localises to the membrane. In Oryza sativa subsp. japonica (Rice), this protein is Cytochrome P450 714C3 (CYP714C3).